Here is a 289-residue protein sequence, read N- to C-terminus: 33 kDa chaperonin (289 aa).

Disulfide bonds link C230-C232 and C263-C266.

It belongs to the HSP33 family. Post-translationally, under oxidizing conditions two disulfide bonds are formed involving the reactive cysteines. Under reducing conditions zinc is bound to the reactive cysteines and the protein is inactive.

The protein localises to the cytoplasm. Redox regulated molecular chaperone. Protects both thermally unfolding and oxidatively damaged proteins from irreversible aggregation. Plays an important role in the bacterial defense system toward oxidative stress. The chain is 33 kDa chaperonin from Shigella flexneri serotype 5b (strain 8401).